The chain runs to 184 residues: Endothelial cell-specific molecule 1 (184 aa).

The N-terminal stretch at 1–19 is a signal peptide; sequence MKSVLLLTTLLVPAHLVAA. Residues 24–102 enclose the IGFBP N-terminal domain; the sequence is YAVDCPQHCD…GEEFGICKDC (79 aa). Disulfide bonds link C28-C51, C32-C53, C37-C54, C43-C57, C65-C83, and C77-C99. S156 carries an O-linked (Xyl...) (chondroitin sulfate) serine glycan.

Monomer. In terms of processing, may contain intrachain disulfide bonds. O-glycosylated; contains chondroitin sulfate and dermatan sulfate. Expressed in lung, on the vascular capillary network within alveolar walls, and also at lower level in kidney.

The protein resides in the secreted. Functionally, involved in angiogenesis; promotes angiogenic sprouting. May have potent implications in lung endothelial cell-leukocyte interactions. The protein is Endothelial cell-specific molecule 1 (ESM1) of Homo sapiens (Human).